The following is a 215-amino-acid chain: Pyrrolidone-carboxylate peptidase (215 aa).

Residues Glu-80, Cys-143, and His-167 contribute to the active site.

The protein belongs to the peptidase C15 family. As to quaternary structure, homotetramer.

Its subcellular location is the cytoplasm. The catalysed reaction is Release of an N-terminal pyroglutamyl group from a polypeptide, the second amino acid generally not being Pro.. In terms of biological role, removes 5-oxoproline from various penultimate amino acid residues except L-proline. The sequence is that of Pyrrolidone-carboxylate peptidase from Yersinia pseudotuberculosis serotype O:1b (strain IP 31758).